The following is a 48-amino-acid chain: Protein YodE (48 aa).

In Escherichia coli (strain K12), this protein is Protein YodE.